The primary structure comprises 106 residues: Nucleoid-associated protein XOO1065 (106 aa).

Over residues Lys-80–Met-89 the composition is skewed to basic and acidic residues. A disordered region spans residues Lys-80 to Phe-106.

The protein belongs to the YbaB/EbfC family. As to quaternary structure, homodimer.

It localises to the cytoplasm. It is found in the nucleoid. Its function is as follows. Binds to DNA and alters its conformation. May be involved in regulation of gene expression, nucleoid organization and DNA protection. In Xanthomonas oryzae pv. oryzae (strain KACC10331 / KXO85), this protein is Nucleoid-associated protein XOO1065.